Reading from the N-terminus, the 255-residue chain is NAD kinase (255 aa).

The active-site Proton acceptor is Asp44. Residues 44-45 (DG), His49, 114-115 (NE), Asp144, Ala152, 155-160 (SAYNLS), and Gln216 contribute to the NAD(+) site.

The protein belongs to the NAD kinase family. A divalent metal cation serves as cofactor.

It is found in the cytoplasm. It carries out the reaction NAD(+) + ATP = ADP + NADP(+) + H(+). Involved in the regulation of the intracellular balance of NAD and NADP, and is a key enzyme in the biosynthesis of NADP. Catalyzes specifically the phosphorylation on 2'-hydroxyl of the adenosine moiety of NAD to yield NADP. The sequence is that of NAD kinase from Rickettsia conorii (strain ATCC VR-613 / Malish 7).